Reading from the N-terminus, the 305-residue chain is Ornithine carbamoyltransferase (305 aa).

Carbamoyl phosphate-binding positions include 50–53 (STRT), Gln77, Arg101, and 128–131 (HPCQ). L-ornithine is bound by residues Asn162, Asp220, and 224–225 (SM). Carbamoyl phosphate is bound by residues 260–261 (CL) and Arg288.

This sequence belongs to the aspartate/ornithine carbamoyltransferase superfamily. OTCase family.

It is found in the cytoplasm. It carries out the reaction carbamoyl phosphate + L-ornithine = L-citrulline + phosphate + H(+). Its pathway is amino-acid degradation; L-arginine degradation via ADI pathway; carbamoyl phosphate from L-arginine: step 2/2. In terms of biological role, reversibly catalyzes the transfer of the carbamoyl group from carbamoyl phosphate (CP) to the N(epsilon) atom of ornithine (ORN) to produce L-citrulline. This is Ornithine carbamoyltransferase from Akkermansia muciniphila (strain ATCC BAA-835 / DSM 22959 / JCM 33894 / BCRC 81048 / CCUG 64013 / CIP 107961 / Muc).